A 244-amino-acid chain; its full sequence is Phosphoadenosine 5'-phosphosulfate reductase (244 aa).

C239 functions as the Nucleophile; cysteine thiosulfonate intermediate in the catalytic mechanism.

This sequence belongs to the PAPS reductase family. CysH subfamily.

Its subcellular location is the cytoplasm. The enzyme catalyses [thioredoxin]-disulfide + sulfite + adenosine 3',5'-bisphosphate + 2 H(+) = [thioredoxin]-dithiol + 3'-phosphoadenylyl sulfate. It participates in sulfur metabolism; hydrogen sulfide biosynthesis; sulfite from sulfate: step 3/3. Functionally, catalyzes the formation of sulfite from phosphoadenosine 5'-phosphosulfate (PAPS) using thioredoxin as an electron donor. The chain is Phosphoadenosine 5'-phosphosulfate reductase from Buchnera aphidicola subsp. Acyrthosiphon pisum (strain 5A).